We begin with the raw amino-acid sequence, 596 residues long: Protein FlbA (596 aa).

TPR repeat units lie at residues 91–124 (GLAWHILAIAREKTGDFASSLRAYEAALALLPDH), 159–192 (VEGANNLACALRELNRESEAIEVLKAALGANPEA), 193–226 (AVLWNTLGTVLCNIGDAAGSIVFFDESLRLAPDF), and 228–260 (KAYHNRAFARLDLGEIEAALADCEAAMRSPGSP).

The sequence is that of Protein FlbA (flbA) from Caulobacter vibrioides (strain ATCC 19089 / CIP 103742 / CB 15) (Caulobacter crescentus).